The primary structure comprises 321 residues: MSRPERLQPGVKLRDADKVSRIPVKVVPSERETMLRKPDWLRVKLPASNQRIVDIKQALRKNGLHSVCEEASCPNLAECFNHGTATFMILGAICTRRCPFCDVAHGRPLKPDAEEPVKLAQTIRDMKLKYVVITSVDRDDLRDGGAQHFADCIREIRKLNPEIKIEILVPDFRGRIDAALEILATEPPDVFNHNLETAPKHYRKARPGANYQWSLDLLKKFKEQHPHIPTKSGLMMGLGETNEEIAEVLRDLRAHNVEMLTLGQYLQPSKFHLPVERYVPPAEFDELKDYAEEIGFTHAACGPMVRSSYHADLQAQGKEVK.

Residues Cys-68, Cys-73, Cys-79, Cys-94, Cys-98, Cys-101, and Ser-308 each contribute to the [4Fe-4S] cluster site. The Radical SAM core domain maps to 80 to 297 (FNHGTATFMI…KDYAEEIGFT (218 aa)).

It belongs to the radical SAM superfamily. Lipoyl synthase family. [4Fe-4S] cluster is required as a cofactor.

It localises to the cytoplasm. The catalysed reaction is [[Fe-S] cluster scaffold protein carrying a second [4Fe-4S](2+) cluster] + N(6)-octanoyl-L-lysyl-[protein] + 2 oxidized [2Fe-2S]-[ferredoxin] + 2 S-adenosyl-L-methionine + 4 H(+) = [[Fe-S] cluster scaffold protein] + N(6)-[(R)-dihydrolipoyl]-L-lysyl-[protein] + 4 Fe(3+) + 2 hydrogen sulfide + 2 5'-deoxyadenosine + 2 L-methionine + 2 reduced [2Fe-2S]-[ferredoxin]. Its pathway is protein modification; protein lipoylation via endogenous pathway; protein N(6)-(lipoyl)lysine from octanoyl-[acyl-carrier-protein]: step 2/2. Its function is as follows. Catalyzes the radical-mediated insertion of two sulfur atoms into the C-6 and C-8 positions of the octanoyl moiety bound to the lipoyl domains of lipoate-dependent enzymes, thereby converting the octanoylated domains into lipoylated derivatives. The polypeptide is Lipoyl synthase (Shewanella loihica (strain ATCC BAA-1088 / PV-4)).